A 185-amino-acid chain; its full sequence is Lipid A acyltransferase PagP (185 aa).

The signal sequence occupies residues 1–24; the sequence is MKTHNDILAALAALPLFLTGAAFA. Active-site residues include His-57, Asp-100, and Ser-101.

The protein belongs to the lipid A palmitoyltransferase family. In terms of assembly, homodimer.

Its subcellular location is the cell outer membrane. The catalysed reaction is a lipid A + a 1,2-diacyl-sn-glycero-3-phosphocholine = a hepta-acyl lipid A + a 2-acyl-sn-glycero-3-phosphocholine. It carries out the reaction a lipid IVA + a 1,2-diacyl-sn-glycero-3-phosphocholine = a lipid IVB + a 2-acyl-sn-glycero-3-phosphocholine. It catalyses the reaction a lipid IIA + a 1,2-diacyl-sn-glycero-3-phosphocholine = a lipid IIB + a 2-acyl-sn-glycero-3-phosphocholine. Transfers a fatty acid residue from the sn-1 position of a phospholipid to the N-linked hydroxyfatty acid chain on the proximal unit of lipid A or its precursors. The chain is Lipid A acyltransferase PagP from Edwardsiella tarda (strain FL6-60).